The sequence spans 520 residues: 2-isopropylmalate synthase (520 aa).

In terms of domain architecture, Pyruvate carboxyltransferase spans 12–274 (IRIFDTTLRD…DSAINTPRIV (263 aa)). 4 residues coordinate Mn(2+): D21, H209, H211, and N245. Positions 396–520 (RLASMTISDV…VVAGKTAAVA (125 aa)) are regulatory domain.

Belongs to the alpha-IPM synthase/homocitrate synthase family. LeuA type 1 subfamily. Homodimer. The cofactor is Mn(2+).

It is found in the cytoplasm. The catalysed reaction is 3-methyl-2-oxobutanoate + acetyl-CoA + H2O = (2S)-2-isopropylmalate + CoA + H(+). Its pathway is amino-acid biosynthesis; L-leucine biosynthesis; L-leucine from 3-methyl-2-oxobutanoate: step 1/4. Functionally, catalyzes the condensation of the acetyl group of acetyl-CoA with 3-methyl-2-oxobutanoate (2-ketoisovalerate) to form 3-carboxy-3-hydroxy-4-methylpentanoate (2-isopropylmalate). This chain is 2-isopropylmalate synthase, found in Xanthomonas euvesicatoria pv. vesicatoria (strain 85-10) (Xanthomonas campestris pv. vesicatoria).